We begin with the raw amino-acid sequence, 491 residues long: Chromosomal replication initiator protein DnaA (491 aa).

A domain I, interacts with DnaA modulators region spans residues 1-69 (MTTWDKCLKK…TIQECHGNDL (69 aa)). A domain II region spans residues 69-154 (LIIEYSNKKF…KEDEEYSFGL (86 aa)). Residues 155 to 371 (PLKEKYVFDS…GALNRVLTTS (217 aa)) are domain III, AAA+ region. ATP contacts are provided by Gly-199, Gly-201, Lys-202, and Thr-203. The segment at 372-491 (KFNHKDPTIE…YELLLDKISR (120 aa)) is domain IV, binds dsDNA.

It belongs to the DnaA family. Oligomerizes as a right-handed, spiral filament on DNA at oriC.

It is found in the cytoplasm. Its function is as follows. Plays an essential role in the initiation and regulation of chromosomal replication. ATP-DnaA binds to the origin of replication (oriC) to initiate formation of the DNA replication initiation complex once per cell cycle. Binds the DnaA box (a 9 base pair repeat at the origin) and separates the double-stranded (ds)DNA. Forms a right-handed helical filament on oriC DNA; dsDNA binds to the exterior of the filament while single-stranded (ss)DNA is stabiized in the filament's interior. The ATP-DnaA-oriC complex binds and stabilizes one strand of the AT-rich DNA unwinding element (DUE), permitting loading of DNA polymerase. After initiation quickly degrades to an ADP-DnaA complex that is not apt for DNA replication. Binds acidic phospholipids. The sequence is that of Chromosomal replication initiator protein DnaA from Francisella tularensis subsp. holarctica (strain OSU18).